Here is a 362-residue protein sequence, read N- to C-terminus: Probable tocopherol O-methyltransferase, chloroplastic (362 aa).

The transit peptide at M1 to R55 directs the protein to the chloroplast. Positions V141 to G150 are SAM motif I. The tract at residues G204–M212 is SAM motif II. Positions V231–I240 are SAM motif III.

This sequence belongs to the class I-like SAM-binding methyltransferase superfamily. gTMT family.

It is found in the plastid. The protein localises to the chloroplast. The enzyme catalyses gamma-tocopherol + S-adenosyl-L-methionine = (+)-alpha-tocopherol + S-adenosyl-L-homocysteine + H(+). It catalyses the reaction delta-tocotrienol + S-adenosyl-L-methionine = beta-tocotrienol + S-adenosyl-L-homocysteine + H(+). The catalysed reaction is gamma-tocotrienol + S-adenosyl-L-methionine = alpha-tocotrienol + S-adenosyl-L-homocysteine + H(+). It carries out the reaction delta-tocopherol + S-adenosyl-L-methionine = beta-tocopherol + S-adenosyl-L-homocysteine + H(+). It participates in cofactor biosynthesis; tocopherol biosynthesis. Functionally, involved in the synthesis of tocopherol (vitamin E). Methylates gamma- and delta-tocopherol to form beta- and alpha-tocopherol, respectively. This Oryza sativa subsp. japonica (Rice) protein is Probable tocopherol O-methyltransferase, chloroplastic (VTE4).